The primary structure comprises 442 residues: MSYCPNTPEDIREMLAAIGKGSVEELFEPIHHTLRAKSFNLPAGISEQELLVKMQELAACDRHLINFIGGGYYDHHIPAVVDHLSGRAEFYTAYTPYQPECSQGTLQALFEYQTAICRLTGMEVSNASLYDGGTALAEAAMMALRITGRNRVVIDASVNPFARQIVATYLKNIGVEMVEIPTSSGSADRSALTEALTGDVAAVMVQNPNFFGSIEDLTAISQAAHAKGALLVTSVYPISLGLIKSPGEMGADIVVGDGQSLGNPLAFGGPSFGFIATTKKYIRNLPGRIIGETIDKEGRRGFVLTLQAREQHIKRHKATSNICSNQSLCALRGLIFLASVGKEGMVELANLNRDKAEYAKERLGSIRGVRVLNRGATFNEFTLELPKDAADVVRTLMEKGIAAGVPLGEYYAGMANCMVVTVTEKRSRGEIEALAEALEASL.

The protein belongs to the GcvP family. N-terminal subunit subfamily. The glycine cleavage system is composed of four proteins: P, T, L and H. In this organism, the P 'protein' is a heterodimer of two subunits.

The enzyme catalyses N(6)-[(R)-lipoyl]-L-lysyl-[glycine-cleavage complex H protein] + glycine + H(+) = N(6)-[(R)-S(8)-aminomethyldihydrolipoyl]-L-lysyl-[glycine-cleavage complex H protein] + CO2. The glycine cleavage system catalyzes the degradation of glycine. The P protein binds the alpha-amino group of glycine through its pyridoxal phosphate cofactor; CO(2) is released and the remaining methylamine moiety is then transferred to the lipoamide cofactor of the H protein. The protein is Probable glycine dehydrogenase (decarboxylating) subunit 1 of Geotalea daltonii (strain DSM 22248 / JCM 15807 / FRC-32) (Geobacter daltonii).